A 400-amino-acid polypeptide reads, in one-letter code: Coenzyme A biosynthesis bifunctional protein CoaBC (400 aa).

The tract at residues M1–N190 is phosphopantothenoylcysteine decarboxylase. The active-site Proton donor is the C158. The tract at residues V191 to L400 is phosphopantothenate--cysteine ligase. CTP is bound by residues G273–A275, D279, K289, P305–I308, F324, K338, and K342.

It in the N-terminal section; belongs to the HFCD (homo-oligomeric flavin containing Cys decarboxylase) superfamily. The protein in the C-terminal section; belongs to the PPC synthetase family. The cofactor is Mg(2+). Requires FMN as cofactor.

It carries out the reaction N-[(R)-4-phosphopantothenoyl]-L-cysteine + H(+) = (R)-4'-phosphopantetheine + CO2. The enzyme catalyses (R)-4'-phosphopantothenate + L-cysteine + CTP = N-[(R)-4-phosphopantothenoyl]-L-cysteine + CMP + diphosphate + H(+). It functions in the pathway cofactor biosynthesis; coenzyme A biosynthesis; CoA from (R)-pantothenate: step 2/5. It participates in cofactor biosynthesis; coenzyme A biosynthesis; CoA from (R)-pantothenate: step 3/5. In terms of biological role, catalyzes two sequential steps in the biosynthesis of coenzyme A. In the first step cysteine is conjugated to 4'-phosphopantothenate to form 4-phosphopantothenoylcysteine. In the second step the latter compound is decarboxylated to form 4'-phosphopantotheine. The polypeptide is Coenzyme A biosynthesis bifunctional protein CoaBC (Haemophilus influenzae (strain ATCC 51907 / DSM 11121 / KW20 / Rd)).